A 325-amino-acid polypeptide reads, in one-letter code: Aldo-keto reductase family 1 member A1 (325 aa).

A2 carries the N-acetylalanine modification. Position 4 is a phosphoserine (S4). Residues 11–20 (GQKMPLIGLG), T21, and W22 contribute to the NADP(+) site. Residue S38 is modified to Phosphoserine. NADP(+) is bound at residue D45. Y50 serves as the catalytic Proton donor. K127 bears the N6-acetyllysine; alternate mark. The residue at position 127 (K127) is an N6-succinyllysine; alternate. Position 145 is an N6-succinyllysine (K145). The NADP(+) site is built by S162, N163, S211, L213, S215, S216, K263, S264, I265, T266, R269, Q272, and N273. S211 is subject to Phosphoserine.

Belongs to the aldo/keto reductase family.

It localises to the cytoplasm. The protein resides in the cytosol. It is found in the apical cell membrane. It carries out the reaction a primary alcohol + NADP(+) = an aldehyde + NADPH + H(+). The enzyme catalyses L-gulonate + NADP(+) = aldehydo-D-glucuronate + NADPH + H(+). It catalyses the reaction L-gulono-1,4-lactone + NADP(+) = D-glucurono-3,6-lactone + NADPH + H(+). The catalysed reaction is allyl alcohol + NADP(+) = acrolein + NADPH + H(+). It carries out the reaction glycerol + NADP(+) = D-glyceraldehyde + NADPH + H(+). The enzyme catalyses glycerol + NADP(+) = L-glyceraldehyde + NADPH + H(+). It catalyses the reaction hydroxyacetone + NADP(+) = methylglyoxal + NADPH + H(+). The catalysed reaction is 3-deoxyfructose + NADP(+) = 3-deoxyglucosone + NADPH + H(+). It carries out the reaction (R)-mevalonate + NADP(+) = (R)-mevaldate + NADPH + H(+). The enzyme catalyses pyridine 3-methanol + NADP(+) = pyridine-3-carbaldehyde + NADPH + H(+). It catalyses the reaction S-nitroso-CoA + NADPH + H(+) = sulfinamide-CoA + NADP(+). The catalysed reaction is S-nitrosoglutathione + NADPH + H(+) = S-(hydroxysulfenamide)glutathione + NADP(+). Functionally, catalyzes the NADPH-dependent reduction of a wide variety of carbonyl-containing compounds to their corresponding alcohols. Displays enzymatic activity towards endogenous metabolites such as aromatic and aliphatic aldehydes, ketones, monosaccharides and bile acids, with a preference for negatively charged substrates, such as glucuronate and succinic semialdehyde. Functions as a detoxifiying enzyme by reducing a range of toxic aldehydes. Reduces methylglyoxal and 3-deoxyglucosone, which are present at elevated levels under hyperglycemic conditions and are cytotoxic. Involved also in the detoxification of lipid-derived aldehydes like acrolein. Plays a role in the activation of procarcinogens, such as polycyclic aromatic hydrocarbon trans-dihydrodiols, and in the metabolism of various xenobiotics and drugs. Also acts as an inhibitor of protein S-nitrosylation by mediating degradation of S-nitroso-coenzyme A (S-nitroso-CoA), a cofactor required to S-nitrosylate proteins. S-nitroso-CoA reductase activity is involved in reprogramming intermediary metabolism in renal proximal tubules, notably by inhibiting protein S-nitrosylation of isoform 2 of PKM (PKM2). Also acts as a S-nitroso-glutathione reductase by catalyzing the NADPH-dependent reduction of S-nitrosoglutathione. Displays no reductase activity towards retinoids. The sequence is that of Aldo-keto reductase family 1 member A1 (AKR1A1) from Pongo abelii (Sumatran orangutan).